We begin with the raw amino-acid sequence, 125 residues long: UPF0102 protein mlr4633 (125 aa).

It belongs to the UPF0102 family.

This Mesorhizobium japonicum (strain LMG 29417 / CECT 9101 / MAFF 303099) (Mesorhizobium loti (strain MAFF 303099)) protein is UPF0102 protein mlr4633.